A 180-amino-acid polypeptide reads, in one-letter code: Fucolectin-2 (180 aa).

Positions 1 to 22 (MKVKMIMLLFQILAILTLKSDS) are cleaved as a signal peptide. Positions 31–179 (QENVALRGRA…VEVNVLFPAP (149 aa)) are F5/8 type C-like. Asn-58, Asp-61, Asn-63, and Ser-72 together coordinate Ca(2+). 3 disulfide bridges follow: Cys-73–Cys-168, Cys-104–Cys-105, and Cys-130–Cys-146. Alpha-L-fucose contacts are provided by His-75 and Arg-101. A Cell attachment site motif is present at residues 101-103 (RGD). Arg-108 is a binding site for alpha-L-fucose. Positions 168 and 169 each coordinate Ca(2+).

This sequence belongs to the fucolectin family. In terms of assembly, homotrimer. Parenchymal hepatocytes.

It is found in the secreted. The protein localises to the extracellular space. In terms of biological role, acts as a defensive agent. Recognizes blood group fucosylated oligosaccharides including A, B, H and Lewis B-type antigens. Does not recognize Lewis A antigen and has low affinity for monovalent haptens. This chain is Fucolectin-2, found in Anguilla japonica (Japanese eel).